Reading from the N-terminus, the 461-residue chain is D-phenylhydantoinase (461 aa).

H59, H61, and K151 together coordinate a divalent metal cation. K151 is modified (N6-carboxylysine). Y156 contributes to the substrate binding site. 2 residues coordinate a divalent metal cation: H182 and H239. S286 is a substrate binding site. A divalent metal cation is bound at residue D313. N335 contributes to the substrate binding site.

Belongs to the metallo-dependent hydrolases superfamily. Hydantoinase/dihydropyrimidinase family. Homotetramer. It depends on Zn(2+) as a cofactor. The cofactor is Ni(2+). Co(2+) serves as cofactor. Requires Mn(2+) as cofactor. Post-translationally, carboxylation allows a single lysine to coordinate two divalent metal cations.

It catalyses the reaction D-5-phenylhydantoin + H2O = N-carbamoyl-D-phenylglycine + H(+). Catalyzes the stereospecific hydrolysis of the cyclic amide bond of D-hydantoin derivatives with an aromatic side chains at the 5'-position. Has no activity on dihydropyrimidines. The physiological function is unknown. In Escherichia coli (strain K12), this protein is D-phenylhydantoinase (hyuA).